A 146-amino-acid polypeptide reads, in one-letter code: MSILDEFKSFIAKGNVMDMAVGIIIGAAFTGIVSSLVADLINPIIGLITGGIDFSNLFVNLGDGDYASLAAARDAGAPVFAYGSFITAVINFLIIAWVVFLLVKIVNRVKDAAIHKSAKEAEAQPAGPTQEQLLAEIRDLLKRSPA.

3 consecutive transmembrane segments (helical) span residues 21–41, 44–64, and 83–103; these read VGII…ADLI, IIGL…LGDG, and GSFI…FLLV.

The protein belongs to the MscL family. Homopentamer.

The protein localises to the cell inner membrane. Channel that opens in response to stretch forces in the membrane lipid bilayer. May participate in the regulation of osmotic pressure changes within the cell. This is Large-conductance mechanosensitive channel from Cereibacter sphaeroides (strain ATCC 17029 / ATH 2.4.9) (Rhodobacter sphaeroides).